Consider the following 367-residue polypeptide: Quinolinate synthase (367 aa).

2 residues coordinate iminosuccinate: His45 and Ser62. Residue Cys109 coordinates [4Fe-4S] cluster. Iminosuccinate contacts are provided by residues 140–142 (YVN) and Ser161. Residue Cys229 coordinates [4Fe-4S] cluster. Iminosuccinate contacts are provided by residues 255–257 (HPE) and Thr272. Cys319 provides a ligand contact to [4Fe-4S] cluster.

The protein belongs to the quinolinate synthase family. Type 3 subfamily. [4Fe-4S] cluster is required as a cofactor.

It localises to the cytoplasm. It carries out the reaction iminosuccinate + dihydroxyacetone phosphate = quinolinate + phosphate + 2 H2O + H(+). The protein operates within cofactor biosynthesis; NAD(+) biosynthesis; quinolinate from iminoaspartate: step 1/1. Its function is as follows. Catalyzes the condensation of iminoaspartate with dihydroxyacetone phosphate to form quinolinate. This Geobacillus sp. (strain WCH70) protein is Quinolinate synthase.